Reading from the N-terminus, the 471-residue chain is 3-isopropylmalate dehydratase large subunit (471 aa).

[4Fe-4S] cluster is bound by residues Cys349, Cys409, and Cys412.

The protein belongs to the aconitase/IPM isomerase family. LeuC type 1 subfamily. Heterodimer of LeuC and LeuD. Requires [4Fe-4S] cluster as cofactor.

It carries out the reaction (2R,3S)-3-isopropylmalate = (2S)-2-isopropylmalate. It functions in the pathway amino-acid biosynthesis; L-leucine biosynthesis; L-leucine from 3-methyl-2-oxobutanoate: step 2/4. In terms of biological role, catalyzes the isomerization between 2-isopropylmalate and 3-isopropylmalate, via the formation of 2-isopropylmaleate. The protein is 3-isopropylmalate dehydratase large subunit of Aliivibrio salmonicida (strain LFI1238) (Vibrio salmonicida (strain LFI1238)).